The following is a 447-amino-acid chain: Phosphoglucosamine mutase (447 aa).

Serine 104 serves as the catalytic Phosphoserine intermediate. Positions 104, 243, 245, and 247 each coordinate Mg(2+). Serine 104 is subject to Phosphoserine.

It belongs to the phosphohexose mutase family. The cofactor is Mg(2+). Post-translationally, activated by phosphorylation.

It carries out the reaction alpha-D-glucosamine 1-phosphate = D-glucosamine 6-phosphate. Functionally, catalyzes the conversion of glucosamine-6-phosphate to glucosamine-1-phosphate. This Corynebacterium efficiens (strain DSM 44549 / YS-314 / AJ 12310 / JCM 11189 / NBRC 100395) protein is Phosphoglucosamine mutase.